The chain runs to 319 residues: Olfactory receptor 10Q1 (319 aa).

The Extracellular portion of the chain corresponds to Met1–Val29. A glycan (N-linked (GlcNAc...) asparagine) is linked at Asn9. Residues Leu30 to Ile50 form a helical membrane-spanning segment. At Trp51–Thr58 the chain is on the cytoplasmic side. Residues Leu59–Thr79 form a helical membrane-spanning segment. The Extracellular segment spans residues Val80–Ala103. Cysteines 101 and 194 form a disulfide. The chain crosses the membrane as a helical span at residues Gln104–Tyr124. Topologically, residues Asp125–Glu143 are cytoplasmic. A helical membrane pass occupies residues Leu144–Thr164. The Extracellular segment spans residues Ala165–Ala202. A helical membrane pass occupies residues Val203–Ser222. Residues Tyr223–Ala242 lie on the Cytoplasmic side of the membrane. A helical transmembrane segment spans residues Phe243–Val263. The Extracellular portion of the chain corresponds to Tyr264 to Asp276. The helical transmembrane segment at Ser277–Leu297 threads the bilayer. Residues Arg298 to Asn319 lie on the Cytoplasmic side of the membrane.

It belongs to the G-protein coupled receptor 1 family.

The protein resides in the cell membrane. Odorant receptor. The chain is Olfactory receptor 10Q1 (OR10Q1) from Homo sapiens (Human).